We begin with the raw amino-acid sequence, 565 residues long: Nephrocystin-1 (565 aa).

Over residues 1-32 (GEEEDEEEEEEEESEEGGGEEEESEEEEEEKQ) the composition is skewed to acidic residues. Disordered regions lie at residues 1 to 46 (GEEE…KEYI) and 95 to 132 (VEPY…KQRT). Residues 2-48 (EEEDEEEEEEEESEEGGGEEEESEEEEEEKQENESHHQATSKEYIAV) are a coiled coil. Ser14 carries the post-translational modification Phosphoserine. Residues 40-100 (ATSKEYIAVG…PRTYVEPYNK (61 aa)) form the SH3 domain. The segment covering 104–118 (QDTSEEEDSEEDVEV) has biased composition (acidic residues). Position 182 is a phosphotyrosine; by FAK2 (Tyr182). Residue Tyr554 is modified to Phosphotyrosine; by SRC.

The protein belongs to the nephrocystin-1 family. In terms of assembly, interacts with Crk-associated substrate BCAR1, NPHP4, PTK2B/PYK2 and tensin. Interacts with INVS and NPHP3. Interacts with AHI1 and TNK2. Interacts with NPHP4 in a complex containing NPHP1, NPHP4 and RPGRIP1L/NPHP8. Interacts with IQCB1; the interaction likely requires additional interactors. Interacts with KIF7. Interacts with ANKS3. Interacts with SPATA7. Interacts with FLNA. As to expression, expressed in renal cells (at protein level).

It is found in the cell junction. It localises to the adherens junction. The protein localises to the cell projection. Its subcellular location is the cilium. The protein resides in the cytoplasm. It is found in the cytoskeleton. It localises to the cilium axoneme. The protein localises to the tight junction. Its function is as follows. Together with BCAR1 it may play a role in the control of epithelial cell polarity. Involved in the organization of apical junctions in kidney cells together with NPHP4 and RPGRIP1L/NPHP8. Does not seem to be strictly required for ciliogenesis. Seems to help to recruit PTK2B/PYK2 to cell matrix adhesions, thereby initiating phosphorylation of PTK2B/PYK2 and PTK2B/PYK2-dependent signaling. May play a role in the regulation of intraflagellar transport (IFT) during cilia assembly. Required for normal retina development. In connecting photoreceptor cilia influences the movement of some IFT proteins such as IFT88 and WDR19. Involved in spermatogenesis. The sequence is that of Nephrocystin-1 (NPHP1) from Canis lupus familiaris (Dog).